A 210-amino-acid polypeptide reads, in one-letter code: MSAKSAISKEIFAPLDERMLGAVQVKRRTKKKIPFLATGGQGEYLTYICLSVTNKKPTQASITKVKQFEGSTSFVRRSQWMLEQLRQVKGIDPNRDSAEFDLLFENAFDQWVASTASEKCTFFQILHHTCQRYLTDRKPEFINCQSKIMGGNSILHSAADSVTSAVQKASQALNERGERLGRAEEKTEDLKNSAQQFAETAHKLAMKHKC.

Position 2 is an N-acetylserine (S2). Residues 151 to 210 (GNSILHSAADSVTSAVQKASQALNERGERLGRAEEKTEDLKNSAQQFAETAHKLAMKHKC) enclose the v-SNARE coiled-coil homology domain.

Part of a ternary complex containing SNAP25 and STX1A that can be dissociated by NAPA and NSF. Interacts with STX4A.

The protein localises to the cytoplasm. The protein resides in the membrane. Forms non-fusogenic complexes with SNAP25 and STX1A and may thereby modulate the formation of functional SNARE complexes and exocytosis. The polypeptide is Syntaxin-binding protein 6 (STXBP6) (Bos taurus (Bovine)).